A 105-amino-acid polypeptide reads, in one-letter code: UPF0235 protein RPR_04990 (105 aa).

It belongs to the UPF0235 family.

In Rickettsia peacockii (strain Rustic), this protein is UPF0235 protein RPR_04990.